The primary structure comprises 269 residues: MAARLHLRLGPRLRGFASSFAPLLAAHPRALPLSRMGSVAPLAAARARRGFGSAVATAPPAEDEDFATAADLQFEPPLKVVKYPDPILRARNKRINTFDDNLRSLTDEMFDVMYKTDGIGLSAPQVGVNVQLMVFNPAGVKGEGEEIVLVNPVVYKMSKRLLVYEEGCLSFPGIYANVVRPDNVKIDAQDVTGAKIKVKLSGLSARVFQHEFDHLQGILFFDRMSLDVLESVREGLKDLEKKYEESTGLVSPESIENYKGRKDLISFSR.

Residues 1 to 51 (MAARLHLRLGPRLRGFASSFAPLLAAHPRALPLSRMGSVAPLAAARARRGF) constitute a chloroplast transit peptide. Positions 168 and 210 each coordinate Fe cation. Residue Glu211 is part of the active site. Residue His214 coordinates Fe cation.

This sequence belongs to the polypeptide deformylase family. In terms of assembly, homodimer. Requires Fe(2+) as cofactor. As to expression, mainly expressed in mature leaves and sheaths.

The protein localises to the plastid. Its subcellular location is the chloroplast stroma. It localises to the mitochondrion. It carries out the reaction N-terminal N-formyl-L-methionyl-[peptide] + H2O = N-terminal L-methionyl-[peptide] + formate. Inhibited by actinonin. In terms of biological role, removes the formyl group from the N-terminal Met of newly synthesized proteins. This chain is Peptide deformylase 1B, chloroplastic (PDF1B), found in Oryza sativa subsp. japonica (Rice).